We begin with the raw amino-acid sequence, 337 residues long: Pyruvate dehydrogenase E1 component subunit beta (337 aa).

Glu73 provides a ligand contact to thiamine diphosphate.

In terms of assembly, heterodimer of an alpha and a beta chain. Requires thiamine diphosphate as cofactor.

The enzyme catalyses N(6)-[(R)-lipoyl]-L-lysyl-[protein] + pyruvate + H(+) = N(6)-[(R)-S(8)-acetyldihydrolipoyl]-L-lysyl-[protein] + CO2. Functionally, the pyruvate dehydrogenase complex catalyzes the overall conversion of pyruvate to acetyl-CoA and CO(2). It contains multiple copies of three enzymatic components: pyruvate dehydrogenase (E1), dihydrolipoamide acetyltransferase (E2) and lipoamide dehydrogenase (E3). This chain is Pyruvate dehydrogenase E1 component subunit beta (pdhB), found in Leifsonia xyli subsp. xyli (strain CTCB07).